The primary structure comprises 223 residues: Urease accessory protein UreF (223 aa).

The protein belongs to the UreF family. In terms of assembly, ureD, UreF and UreG form a complex that acts as a GTP-hydrolysis-dependent molecular chaperone, activating the urease apoprotein by helping to assemble the nickel containing metallocenter of UreC. The UreE protein probably delivers the nickel.

Its subcellular location is the cytoplasm. Its function is as follows. Required for maturation of urease via the functional incorporation of the urease nickel metallocenter. The protein is Urease accessory protein UreF of Mesorhizobium japonicum (strain LMG 29417 / CECT 9101 / MAFF 303099) (Mesorhizobium loti (strain MAFF 303099)).